We begin with the raw amino-acid sequence, 316 residues long: Beta-ketoacyl-[acyl-carrier-protein] synthase III (316 aa).

Residues Cys-112 and His-243 contribute to the active site. The tract at residues 244–248 is ACP-binding; sequence QANIR. Asn-273 is an active-site residue.

The protein belongs to the thiolase-like superfamily. FabH family. In terms of assembly, homodimer.

Its subcellular location is the cytoplasm. It catalyses the reaction malonyl-[ACP] + acetyl-CoA + H(+) = 3-oxobutanoyl-[ACP] + CO2 + CoA. It participates in lipid metabolism; fatty acid biosynthesis. In terms of biological role, catalyzes the condensation reaction of fatty acid synthesis by the addition to an acyl acceptor of two carbons from malonyl-ACP. Catalyzes the first condensation reaction which initiates fatty acid synthesis and may therefore play a role in governing the total rate of fatty acid production. Possesses both acetoacetyl-ACP synthase and acetyl transacylase activities. Its substrate specificity determines the biosynthesis of branched-chain and/or straight-chain of fatty acids. In Haemophilus ducreyi (strain 35000HP / ATCC 700724), this protein is Beta-ketoacyl-[acyl-carrier-protein] synthase III.